The following is a 218-amino-acid chain: Small ribosomal subunit protein uS3c (218 aa).

The 80-residue stretch at 39–118 folds into the KH type-2 domain; sequence IRNFIKNYVQ…KLNIAITRIA (80 aa).

It belongs to the universal ribosomal protein uS3 family. Part of the 30S ribosomal subunit.

It localises to the plastid. The protein localises to the chloroplast. In Ipomoea purpurea (Common morning glory), this protein is Small ribosomal subunit protein uS3c (rps3).